The primary structure comprises 491 residues: Ketol-acid reductoisomerase (NADP(+)) (491 aa).

Residues alanine 15 to serine 208 enclose the KARI N-terminal Rossmann domain. Residues cysteine 45–glutamine 48, arginine 68, arginine 76, serine 78, and aspartate 108–glutamine 110 contribute to the NADP(+) site. The active site involves histidine 132. Residue glycine 158 participates in NADP(+) binding. 2 KARI C-terminal knotted domains span residues serine 209–glutamine 344 and phenylalanine 345–methionine 484. The Mg(2+) site is built by aspartate 217, glutamate 221, glutamate 389, and glutamate 393. A substrate-binding site is contributed by serine 414.

This sequence belongs to the ketol-acid reductoisomerase family. The cofactor is Mg(2+).

The catalysed reaction is (2R)-2,3-dihydroxy-3-methylbutanoate + NADP(+) = (2S)-2-acetolactate + NADPH + H(+). It catalyses the reaction (2R,3R)-2,3-dihydroxy-3-methylpentanoate + NADP(+) = (S)-2-ethyl-2-hydroxy-3-oxobutanoate + NADPH + H(+). The protein operates within amino-acid biosynthesis; L-isoleucine biosynthesis; L-isoleucine from 2-oxobutanoate: step 2/4. It participates in amino-acid biosynthesis; L-valine biosynthesis; L-valine from pyruvate: step 2/4. Functionally, involved in the biosynthesis of branched-chain amino acids (BCAA). Catalyzes an alkyl-migration followed by a ketol-acid reduction of (S)-2-acetolactate (S2AL) to yield (R)-2,3-dihydroxy-isovalerate. In the isomerase reaction, S2AL is rearranged via a Mg-dependent methyl migration to produce 3-hydroxy-3-methyl-2-ketobutyrate (HMKB). In the reductase reaction, this 2-ketoacid undergoes a metal-dependent reduction by NADPH to yield (R)-2,3-dihydroxy-isovalerate. The chain is Ketol-acid reductoisomerase (NADP(+)) from Salmonella choleraesuis (strain SC-B67).